We begin with the raw amino-acid sequence, 583 residues long: L-arabonate dehydratase (583 aa).

The [4Fe-4S] cluster site is built by cysteine 56, cysteine 124, and cysteine 197.

Belongs to the IlvD/Edd family. Homodimer. [4Fe-4S] cluster serves as cofactor.

It catalyses the reaction L-arabinonate = 2-dehydro-3-deoxy-L-arabinonate + H2O. Activity is enhanced by Mg(2+), being optimal with a concentration of 1-10 mM Mg(2+). In terms of biological role, catalyzes the dehydration of L-arabonate to L-2-keto-3-deoxyarabonate (L-KDA). Is involved in a degradation pathway of L-arabinose that allows A.brasilense to grow on L-arabinose as a sole carbon source. To a lesser extent, can also use D-xylonate as substrate, but not D-galactonate, D-arabonate, and D-gluconate. This chain is L-arabonate dehydratase (araC), found in Azospirillum brasilense.